A 233-amino-acid chain; its full sequence is MGQKVHPNGMRLGIIKKWNSVWFANTKDFADHLDSDYKVRQFLMKTLEKASISRIIIERPAKSIRVTIYTARPGIVIGKKGEDVEKLRISIAKITGVPVQINISEVRKPELDAKLVSDSITSQLERRVMFRRAMKRSVQNAMRQGAKGIKVEVSGRLGGAEIARREWYREGRVPLHTLRANIDYSISEAHTTYGVIGVKVWIFKGEILGGMETVERLDKPSVQTKKQYRKNRK.

The KH type-2 domain maps to V39–R107.

The protein belongs to the universal ribosomal protein uS3 family. Part of the 30S ribosomal subunit. Forms a tight complex with proteins S10 and S14.

Its function is as follows. Binds the lower part of the 30S subunit head. Binds mRNA in the 70S ribosome, positioning it for translation. This Buchnera aphidicola subsp. Acyrthosiphon pisum (strain APS) (Acyrthosiphon pisum symbiotic bacterium) protein is Small ribosomal subunit protein uS3.